The sequence spans 2120 residues: Alpha-tectorin (2120 aa).

Residues 1-24 form the signal peptide; it reads MNTRSLLSAWAALLVVTVRHRAHA. 6 N-linked (GlcNAc...) asparagine glycosylation sites follow: Asn34, Asn215, Asn258, Asn277, Asn445, and Asn496. Residues 98–252 enclose the NIDO domain; that stretch reads PFCGDVANGI…GRWAFKIDGR (155 aa). The VWFC domain maps to 260–312; the sequence is SLRGQFLHQGEIFWENSNCSTKCRCLDFNNEIFCQEMLAPFETVEPKIKFFQC. The VWFD 1 domain occupies 317–490; it reads TACVVFGDPH…RVPHPERKCS (174 aa). 2 disulfides stabilise this stretch: Cys319–Cys451 and Cys341–Cys489. The region spanning 578–620 is the TIL 1 domain; sequence PGHSHYSGCASGCPATCSDLTAPLRCTAPCPEGCECDDGHVLS. N-linked (GlcNAc...) asparagine glycans are attached at residues Asn666, Asn792, Asn822, Asn834, Asn877, Asn899, Asn907, and Asn928. The region spanning 690–865 is the VWFD 2 domain; it reads GLCSVGQNQV…SWTTFDEICN (176 aa). Residues Cys692 and Cys828 are joined by a disulfide bond. The region spanning 963–1013 is the TIL 2 domain; that stretch reads CPENSHFEECMSCVETCETLATGCCMDTCTEGCQCDEGFALRSPCVPRGEC. N-linked (GlcNAc...) asparagine glycans are attached at residues Asn1025, Asn1041, Asn1207, and Asn1337. Positions 1066–1250 constitute a VWFD 3 domain; it reads ASCIVSGYGH…SWAKRDTFCR (185 aa). Intrachain disulfides connect Cys1068–Cys1213 and Cys1090–Cys1249. Positions 1345–1398 constitute a TIL 3 domain; the sequence is CPPNSHYESCVSLCQPRCAAIRLKSDCGHYCVEGCQCDPGYVLNGKSCILPQNC. One can recognise a VWFD 4 domain in the interval 1458–1633; sequence SFCLAAGGGV…KTNGMQKSCN (176 aa). Cystine bridges form between Cys1460–Cys1594, Cys1482–Cys1632, Cys1684–Cys1742, Cys1708–Cys1751, Cys1753–Cys1785, Cys1773–Cys1865, and Cys1804–Cys1824. N-linked (GlcNAc...) asparagine glycans are attached at residues Asn1511, Asn1537, Asn1723, Asn1739, Asn1761, Asn1818, Asn1831, Asn1847, Asn1887, and Asn1906. The region spanning 1772-2026 is the ZP domain; sequence TCKAAQMEVS…YSCKINCPQH (255 aa). Cystine bridges form between Cys1947-Cys2007, Cys1968-Cys2023, and Cys2012-Cys2019. A lipid anchor (GPI-anchor amidated asparagine) is attached at Asn2058. Residues 2059 to 2120 constitute a propeptide, removed in mature form; sequence GGCEQICTSQ…LWAALHDPTS (62 aa).

As to quaternary structure, may form homomeric filament after self-association or heteromeric filament after association with beta-tectorin. Post-translationally, at least 3 products of tectorin seem to exist: HMM, MMM and LMM. They may be generated by active processing or the result of proteolysis occurring between intrachain disulfide bonds. In terms of processing, the presence of a hydrophobic C-terminus preceded by a potential cleavage site strongly suggests that tectorins are synthesized as glycosylphosphatidylinositol-linked, membrane-bound precursors. Tectorins are targeted to the apical surface of the inner ear epithelia by the lipid and proteolytically released into the extracellular compartment. In terms of tissue distribution, expressed in the inner ear.

It is found in the cell membrane. The protein resides in the secreted. The protein localises to the extracellular space. It localises to the extracellular matrix. Functionally, one of the major non-collagenous components of the tectorial membrane. The tectorial membrane is an extracellular matrix of the inner ear that covers the neuroepithelium of the cochlea and contacts the stereocilia bundles of specialized sensory hair cells. Sound induces movement of these hair cells relative to the tectorial membrane, deflects the stereocilia and leads to fluctuations in hair-cell membrane potential, transducing sound into electrical signals. The protein is Alpha-tectorin (TECTA) of Gallus gallus (Chicken).